A 472-amino-acid polypeptide reads, in one-letter code: 3-isopropylmalate dehydratase large subunit (472 aa).

The disordered stretch occupies residues 289–312; it reads TWGTNPAQGTGVSQVVPSPDDAKD. Residues 290 to 304 show a composition bias toward polar residues; sequence WGTNPAQGTGVSQVV. Residues Cys-347, Cys-407, and Cys-410 each coordinate [4Fe-4S] cluster.

It belongs to the aconitase/IPM isomerase family. LeuC type 1 subfamily. Heterodimer of LeuC and LeuD. The cofactor is [4Fe-4S] cluster.

The catalysed reaction is (2R,3S)-3-isopropylmalate = (2S)-2-isopropylmalate. It participates in amino-acid biosynthesis; L-leucine biosynthesis; L-leucine from 3-methyl-2-oxobutanoate: step 2/4. Catalyzes the isomerization between 2-isopropylmalate and 3-isopropylmalate, via the formation of 2-isopropylmaleate. The chain is 3-isopropylmalate dehydratase large subunit from Halalkalibacterium halodurans (strain ATCC BAA-125 / DSM 18197 / FERM 7344 / JCM 9153 / C-125) (Bacillus halodurans).